A 513-amino-acid polypeptide reads, in one-letter code: Transmembrane protein 151B (513 aa).

A disordered region spans residues 1-29; the sequence is MSPAAPVTESSAAEVHREQTDAPREPQRP. Positions 14 to 28 are enriched in basic and acidic residues; it reads EVHREQTDAPREPQR. Transmembrane regions (helical) follow at residues 46–66, 93–113, and 274–294; these read CLLLSLLMYCCVIAMTWCQVT, YIYIPVAFLVMLYVVYLVECW, and LPWYASTCSFWLAAAFTLSWP. N366, N418, and N505 each carry an N-linked (GlcNAc...) asparagine glycan.

The protein belongs to the TMEM151 family.

Its subcellular location is the membrane. The polypeptide is Transmembrane protein 151B (tmem151b) (Danio rerio (Zebrafish)).